The primary structure comprises 101 residues: Small ribosomal subunit protein uS14 (101 aa).

The protein belongs to the universal ribosomal protein uS14 family. In terms of assembly, part of the 30S ribosomal subunit. Contacts proteins S3 and S10.

In terms of biological role, binds 16S rRNA, required for the assembly of 30S particles and may also be responsible for determining the conformation of the 16S rRNA at the A site. The polypeptide is Small ribosomal subunit protein uS14 (Brucella abortus (strain S19)).